The chain runs to 258 residues: Hydroxyacylglutathione hydrolase (258 aa).

Residues His56, His58, Asp60, His61, His112, Asp132, and His170 each coordinate Zn(2+).

This sequence belongs to the metallo-beta-lactamase superfamily. Glyoxalase II family. In terms of assembly, monomer. Zn(2+) serves as cofactor.

It catalyses the reaction an S-(2-hydroxyacyl)glutathione + H2O = a 2-hydroxy carboxylate + glutathione + H(+). It functions in the pathway secondary metabolite metabolism; methylglyoxal degradation; (R)-lactate from methylglyoxal: step 2/2. Functionally, thiolesterase that catalyzes the hydrolysis of S-D-lactoyl-glutathione to form glutathione and D-lactic acid. In Pseudomonas aeruginosa (strain ATCC 15692 / DSM 22644 / CIP 104116 / JCM 14847 / LMG 12228 / 1C / PRS 101 / PAO1), this protein is Hydroxyacylglutathione hydrolase.